Here is a 468-residue protein sequence, read N- to C-terminus: Cyclin-dependent kinase 14 (468 aa).

Phosphoserine occurs at positions 24, 77, and 94. A disordered region spans residues 103–132 (KTSSAGKESPKVRRHSSPSSPTSPKFGKAD). Position 133 is a phosphoserine (Ser133). One can recognise a Protein kinase domain in the interval 134-418 (YEKLEKLGEG…AQAALSHEYF (285 aa)). Residues 140–148 (LGEGSYATV) and Lys163 each bind ATP. The active-site Proton acceptor is the Asp255. Positions 448-468 (ESMRAFGKNNSYGKSLSNSKH) are disordered. Polar residues predominate over residues 455-468 (KNNSYGKSLSNSKH).

The protein belongs to the protein kinase superfamily. CMGC Ser/Thr protein kinase family. CDC2/CDKX subfamily. As to quaternary structure, found in a complex with LRP6, CCNY and CAPRIN2 during G2/M stage; CAPRIN2 functions as a scaffold for the complex by binding to CCNY via its N terminus and to CDK14 via its C terminus. Interacts with CCNY; CCNY mediates its recruitment to the plasma membrane and promotes phosphorylation of LRP6. Interacts with CCDN3 and CDKN1A. Interacts with SEPT8. Interacts with 14-3-3 proteina YWHAB, YWHAE, YWHAH and YWHAQ.

The protein resides in the cell membrane. It is found in the cytoplasm. It localises to the nucleus. It catalyses the reaction L-seryl-[protein] + ATP = O-phospho-L-seryl-[protein] + ADP + H(+). The enzyme catalyses L-threonyl-[protein] + ATP = O-phospho-L-threonyl-[protein] + ADP + H(+). Its activity is regulated as follows. Serine/threonine-protein kinase activity is promoted by associated cyclins CCDN3 and CCNY and repressed by CDKN1A. In terms of biological role, serine/threonine-protein kinase involved in the control of the eukaryotic cell cycle, whose activity is controlled by an associated cyclin. Acts as a cell-cycle regulator of Wnt signaling pathway during G2/M phase by mediating the phosphorylation of LRP6 at 'Ser-1490', leading to the activation of the Wnt signaling pathway. Acts as a regulator of cell cycle progression and cell proliferation via its interaction with CCDN3. Phosphorylates RB1 in vitro, however the relevance of such result remains to be confirmed in vivo. May also play a role in meiosis, neuron differentiation and may indirectly act as a negative regulator of insulin-responsive glucose transport. In Dasypus novemcinctus (Nine-banded armadillo), this protein is Cyclin-dependent kinase 14 (CDK14).